Consider the following 422-residue polypeptide: Probable ornithine aminotransferase, mitochondrial (422 aa).

An N6-(pyridoxal phosphate)lysine modification is found at K273.

This sequence belongs to the class-III pyridoxal-phosphate-dependent aminotransferase family. It depends on pyridoxal 5'-phosphate as a cofactor.

Its subcellular location is the mitochondrion matrix. The enzyme catalyses a 2-oxocarboxylate + L-ornithine = L-glutamate 5-semialdehyde + an L-alpha-amino acid. It functions in the pathway amino-acid biosynthesis; L-proline biosynthesis; L-glutamate 5-semialdehyde from L-ornithine: step 1/1. The protein is Probable ornithine aminotransferase, mitochondrial of Caenorhabditis elegans.